A 189-amino-acid chain; its full sequence is ATP synthase subunit b (189 aa).

The helical transmembrane segment at 7-27 threads the bilayer; sequence LLIAALAVAPLAHAAEGGFVG.

This sequence belongs to the ATPase B chain family. As to quaternary structure, F-type ATPases have 2 components, F(1) - the catalytic core - and F(0) - the membrane proton channel. F(1) has five subunits: alpha(3), beta(3), gamma(1), delta(1), epsilon(1). F(0) has three main subunits: a(1), b(2) and c(10-14). The alpha and beta chains form an alternating ring which encloses part of the gamma chain. F(1) is attached to F(0) by a central stalk formed by the gamma and epsilon chains, while a peripheral stalk is formed by the delta and b chains.

It localises to the cell inner membrane. Its function is as follows. F(1)F(0) ATP synthase produces ATP from ADP in the presence of a proton or sodium gradient. F-type ATPases consist of two structural domains, F(1) containing the extramembraneous catalytic core and F(0) containing the membrane proton channel, linked together by a central stalk and a peripheral stalk. During catalysis, ATP synthesis in the catalytic domain of F(1) is coupled via a rotary mechanism of the central stalk subunits to proton translocation. In terms of biological role, component of the F(0) channel, it forms part of the peripheral stalk, linking F(1) to F(0). This is ATP synthase subunit b from Hyphomonas neptunium (strain ATCC 15444).